A 46-amino-acid polypeptide reads, in one-letter code: Mu-segestritoxin-Sf1b (46 aa).

Cystine bridges form between cysteine 3–cysteine 19, cysteine 10–cysteine 22, cysteine 18–cysteine 42, and cysteine 24–cysteine 40. The tract at residues arginine 31 to tryptophan 33 is keys region for toxin activity.

The protein belongs to the neurotoxin 16 (SFI) family. Expressed by the venom gland.

It localises to the secreted. Functionally, insecticidal toxin. Causes flaccid paralysis followed by death when injected into Heliothis virescens larvae. Does not induce any toxic effects when injected intravenously into adult mice at a dose of 1.25 mg/kg body weight. The polypeptide is Mu-segestritoxin-Sf1b (Segestria florentina (Tube-web spider)).